Consider the following 439-residue polypeptide: Signal recognition particle 54 kDa protein (439 aa).

GTP-binding positions include 104 to 111, 184 to 188, and 242 to 245; these read GLQGSGKT, DTAGR, and SKLD.

This sequence belongs to the GTP-binding SRP family. SRP54 subfamily. Part of the signal recognition particle protein translocation system, which is composed of SRP and FtsY. Archaeal SRP consists of a 7S RNA molecule of 300 nucleotides and two protein subunits: SRP54 and SRP19.

It is found in the cytoplasm. The enzyme catalyses GTP + H2O = GDP + phosphate + H(+). In terms of biological role, involved in targeting and insertion of nascent membrane proteins into the cytoplasmic membrane. Binds to the hydrophobic signal sequence of the ribosome-nascent chain (RNC) as it emerges from the ribosomes. The SRP-RNC complex is then targeted to the cytoplasmic membrane where it interacts with the SRP receptor FtsY. The protein is Signal recognition particle 54 kDa protein of Methanococcoides burtonii (strain DSM 6242 / NBRC 107633 / OCM 468 / ACE-M).